The primary structure comprises 546 residues: Chaperonin GroEL (546 aa).

Residues 30 to 33 (TLGP), Lys51, 87 to 91 (DGTTT), Gly415, and Asp496 contribute to the ATP site. The interval 526–546 (PEPKSAPAGGMGGMGGMDGMM) is disordered. A compositionally biased stretch (gly residues) spans 534–546 (GGMGGMGGMDGMM).

This sequence belongs to the chaperonin (HSP60) family. In terms of assembly, forms a cylinder of 14 subunits composed of two heptameric rings stacked back-to-back. Interacts with the co-chaperonin GroES.

Its subcellular location is the cytoplasm. The enzyme catalyses ATP + H2O + a folded polypeptide = ADP + phosphate + an unfolded polypeptide.. Functionally, together with its co-chaperonin GroES, plays an essential role in assisting protein folding. The GroEL-GroES system forms a nano-cage that allows encapsulation of the non-native substrate proteins and provides a physical environment optimized to promote and accelerate protein folding. The sequence is that of Chaperonin GroEL from Rhodopseudomonas palustris.